The chain runs to 240 residues: Proteasome subunit alpha (240 aa).

The protein belongs to the peptidase T1A family. In terms of assembly, the 20S proteasome core is composed of 14 alpha and 14 beta subunits that assemble into four stacked heptameric rings, resulting in a barrel-shaped structure. The two inner rings, each composed of seven catalytic beta subunits, are sandwiched by two outer rings, each composed of seven alpha subunits. The catalytic chamber with the active sites is on the inside of the barrel. Has a gated structure, the ends of the cylinder being occluded by the N-termini of the alpha-subunits. Is capped at one or both ends by the proteasome regulatory ATPase, PAN.

The protein localises to the cytoplasm. Its activity is regulated as follows. The formation of the proteasomal ATPase PAN-20S proteasome complex, via the docking of the C-termini of PAN into the intersubunit pockets in the alpha-rings, triggers opening of the gate for substrate entry. Interconversion between the open-gate and close-gate conformations leads to a dynamic regulation of the 20S proteasome proteolysis activity. Functionally, component of the proteasome core, a large protease complex with broad specificity involved in protein degradation. This is Proteasome subunit alpha from Methanoregula boonei (strain DSM 21154 / JCM 14090 / 6A8).